A 325-amino-acid polypeptide reads, in one-letter code: D-alanine--D-alanine ligase (325 aa).

The ATP-grasp domain maps to 121-316; it reads KYVFEGCGLP…FEELVVRILR (196 aa). Residue 147–202 coordinates ATP; the sequence is VAALGTPLSVKPAHEGSSIGIRKVNSAAELAEAYEAAARLDDLVLVEQWIEGPEFT. Mg(2+) contacts are provided by Asp-270, Glu-283, and Asn-285.

Belongs to the D-alanine--D-alanine ligase family. Mg(2+) serves as cofactor. Mn(2+) is required as a cofactor.

The protein resides in the cytoplasm. It carries out the reaction 2 D-alanine + ATP = D-alanyl-D-alanine + ADP + phosphate + H(+). Its pathway is cell wall biogenesis; peptidoglycan biosynthesis. In terms of biological role, cell wall formation. The protein is D-alanine--D-alanine ligase of Marinobacter nauticus (strain ATCC 700491 / DSM 11845 / VT8) (Marinobacter aquaeolei).